The primary structure comprises 758 residues: Putative transcriptional regulatory protein YJL206C (758 aa).

The segment at residues 47-73 (CIACRKRKVRCSGNIPCRLCQTNSYEC) is a DNA-binding region (zn(2)-C6 fungal-type).

This sequence belongs to the ASG1 family.

It is found in the nucleus. This Saccharomyces cerevisiae (strain ATCC 204508 / S288c) (Baker's yeast) protein is Putative transcriptional regulatory protein YJL206C.